A 106-amino-acid polypeptide reads, in one-letter code: Small ribosomal subunit protein uS10 (106 aa).

This sequence belongs to the universal ribosomal protein uS10 family. In terms of assembly, part of the 30S ribosomal subunit.

Involved in the binding of tRNA to the ribosomes. In Prochlorococcus marinus (strain MIT 9303), this protein is Small ribosomal subunit protein uS10.